We begin with the raw amino-acid sequence, 268 residues long: 4-hydroxy-tetrahydrodipicolinate reductase (268 aa).

NAD(+)-binding positions include 10–15 (GASGRM) and Asp36. Arg37 serves as a coordination point for NADP(+). NAD(+) is bound by residues 99 to 101 (GTT) and 123 to 126 (SANM). His156 serves as the catalytic Proton donor/acceptor. His157 is a (S)-2,3,4,5-tetrahydrodipicolinate binding site. The active-site Proton donor is Lys160. 166 to 167 (GT) serves as a coordination point for (S)-2,3,4,5-tetrahydrodipicolinate.

It belongs to the DapB family.

The protein resides in the cytoplasm. It carries out the reaction (S)-2,3,4,5-tetrahydrodipicolinate + NAD(+) + H2O = (2S,4S)-4-hydroxy-2,3,4,5-tetrahydrodipicolinate + NADH + H(+). The enzyme catalyses (S)-2,3,4,5-tetrahydrodipicolinate + NADP(+) + H2O = (2S,4S)-4-hydroxy-2,3,4,5-tetrahydrodipicolinate + NADPH + H(+). It functions in the pathway amino-acid biosynthesis; L-lysine biosynthesis via DAP pathway; (S)-tetrahydrodipicolinate from L-aspartate: step 4/4. Its function is as follows. Catalyzes the conversion of 4-hydroxy-tetrahydrodipicolinate (HTPA) to tetrahydrodipicolinate. This Burkholderia thailandensis (strain ATCC 700388 / DSM 13276 / CCUG 48851 / CIP 106301 / E264) protein is 4-hydroxy-tetrahydrodipicolinate reductase.